Reading from the N-terminus, the 194-residue chain is MRTATIKRQTKETQIEVSLNLDQQSGIQIDTGVGYFDHMLNLLAKHGRFGLVVKATGDLEVDAHHTVEDTGIVLGETLKEALGDKVQIERYGDAMVPMDETLAQVVVDLSGRSYLVFDAELTNPRLGSFETEVTEDFFQALAFAAEMNLHARVLYGRNTHHKIEALFKATGRALRQAVTINPAIEGVNSTKGVI.

Belongs to the imidazoleglycerol-phosphate dehydratase family.

Its subcellular location is the cytoplasm. It carries out the reaction D-erythro-1-(imidazol-4-yl)glycerol 3-phosphate = 3-(imidazol-4-yl)-2-oxopropyl phosphate + H2O. It functions in the pathway amino-acid biosynthesis; L-histidine biosynthesis; L-histidine from 5-phospho-alpha-D-ribose 1-diphosphate: step 6/9. In Limosilactobacillus fermentum (strain NBRC 3956 / LMG 18251) (Lactobacillus fermentum), this protein is Imidazoleglycerol-phosphate dehydratase.